The primary structure comprises 885 residues: Alanine--tRNA ligase (885 aa).

Residues H574, H578, C676, and H680 each coordinate Zn(2+).

It belongs to the class-II aminoacyl-tRNA synthetase family. Requires Zn(2+) as cofactor.

It is found in the cytoplasm. The enzyme catalyses tRNA(Ala) + L-alanine + ATP = L-alanyl-tRNA(Ala) + AMP + diphosphate. Functionally, catalyzes the attachment of alanine to tRNA(Ala) in a two-step reaction: alanine is first activated by ATP to form Ala-AMP and then transferred to the acceptor end of tRNA(Ala). Also edits incorrectly charged Ser-tRNA(Ala) and Gly-tRNA(Ala) via its editing domain. This chain is Alanine--tRNA ligase, found in Syntrophobacter fumaroxidans (strain DSM 10017 / MPOB).